Reading from the N-terminus, the 430-residue chain is Adenylosuccinate synthetase (430 aa).

Residues 12-18 and 40-42 each bind GTP; these read GDEGKGK and GHT. Residue D13 is the Proton acceptor of the active site. 2 residues coordinate Mg(2+): D13 and G40. IMP contacts are provided by residues 13 to 16, 38 to 41, T129, R143, Q224, T239, and R303; these read DEGK and NAGH. H41 (proton donor) is an active-site residue. Residue 299-305 coordinates substrate; it reads TVSNRER. Residues R305, 331–333, and 413–415 contribute to the GTP site; these read KLD and STG.

This sequence belongs to the adenylosuccinate synthetase family. As to quaternary structure, homodimer. It depends on Mg(2+) as a cofactor.

It is found in the cytoplasm. The enzyme catalyses IMP + L-aspartate + GTP = N(6)-(1,2-dicarboxyethyl)-AMP + GDP + phosphate + 2 H(+). It participates in purine metabolism; AMP biosynthesis via de novo pathway; AMP from IMP: step 1/2. In terms of biological role, plays an important role in the de novo pathway of purine nucleotide biosynthesis. Catalyzes the first committed step in the biosynthesis of AMP from IMP. The sequence is that of Adenylosuccinate synthetase from Ehrlichia ruminantium (strain Gardel).